Consider the following 138-residue polypeptide: Transcriptional regulator MraZ (138 aa).

SpoVT-AbrB domains lie at 3-45 (EFQH…PLAE) and 74-117 (ATEC…AAER).

The protein belongs to the MraZ family. In terms of assembly, forms oligomers.

Its subcellular location is the cytoplasm. The protein resides in the nucleoid. In Symbiobacterium thermophilum (strain DSM 24528 / JCM 14929 / IAM 14863 / T), this protein is Transcriptional regulator MraZ.